The sequence spans 455 residues: Ribulose bisphosphate carboxylase large chain (455 aa).

Lys5 is modified (N6,N6,N6-trimethyllysine). Residues Asn114 and Thr164 each coordinate substrate. Lys166 serves as the catalytic Proton acceptor. Lys168 lines the substrate pocket. Positions 192, 194, and 195 each coordinate Mg(2+). Residue Lys192 is modified to N6-carboxylysine. The active-site Proton acceptor is His285. Substrate is bound by residues Arg286, His318, and Ser370.

It belongs to the RuBisCO large chain family. Type I subfamily. In terms of assembly, heterohexadecamer of 8 large chains and 8 small chains; disulfide-linked. The disulfide link is formed within the large subunit homodimers. It depends on Mg(2+) as a cofactor. Post-translationally, the disulfide bond which can form in the large chain dimeric partners within the hexadecamer appears to be associated with oxidative stress and protein turnover.

Its subcellular location is the plastid. It is found in the chloroplast. It carries out the reaction 2 (2R)-3-phosphoglycerate + 2 H(+) = D-ribulose 1,5-bisphosphate + CO2 + H2O. The catalysed reaction is D-ribulose 1,5-bisphosphate + O2 = 2-phosphoglycolate + (2R)-3-phosphoglycerate + 2 H(+). RuBisCO catalyzes two reactions: the carboxylation of D-ribulose 1,5-bisphosphate, the primary event in carbon dioxide fixation, as well as the oxidative fragmentation of the pentose substrate in the photorespiration process. Both reactions occur simultaneously and in competition at the same active site. The sequence is that of Ribulose bisphosphate carboxylase large chain from Lupinus cosentinii (West Australian blue lupine).